A 209-amino-acid chain; its full sequence is V-type ATP synthase subunit D (209 aa).

Belongs to the V-ATPase D subunit family.

Its function is as follows. Produces ATP from ADP in the presence of a proton gradient across the membrane. This chain is V-type ATP synthase subunit D, found in Anaeromyxobacter dehalogenans (strain 2CP-C).